A 419-amino-acid polypeptide reads, in one-letter code: Carboxypeptidase A1 (419 aa).

The N-terminal stretch at 1–16 (MQGLLILSVLLGAALG) is a signal peptide. Residues 17-110 (KEDFVGHQVL…QEQMFASQSR (94 aa)) constitute a propeptide, activation peptide. In terms of domain architecture, Peptidase M14 spans 121–414 (TYHTLDEIYD…LGVLTIMEHT (294 aa)). Residues histidine 179 and glutamate 182 each contribute to the Zn(2+) site. Substrate contacts are provided by residues 179-182 (HSRE), arginine 237, and 254-255 (NR). A disulfide bridge connects residues cysteine 248 and cysteine 271. Position 306 (histidine 306) interacts with Zn(2+). Residues 307 to 308 (SY) and tyrosine 358 contribute to the substrate site. The active-site Proton donor/acceptor is glutamate 380.

The protein belongs to the peptidase M14 family. Monomer. May form a complex with proelastase 2. The cofactor is Zn(2+). As to expression, pancreas.

It localises to the secreted. It catalyses the reaction Release of a C-terminal amino acid, but little or no action with -Asp, -Glu, -Arg, -Lys or -Pro.. It carries out the reaction leukotriene C4 + H2O = leukotriene F4 + glycine. Its activity is regulated as follows. Inhibited by interaction with the S.magnifica carboxypeptidase inhibitor SmCI. Functionally, carboxypeptidase that catalyzes the release of a C-terminal amino acid, but has little or no action with -Asp, -Glu, -Arg, -Lys or -Pro. Catalyzes the conversion of leukotriene C4 to leukotriene F4 via the hydrolysis of an amide bond. The protein is Carboxypeptidase A1 (CPA1) of Bos taurus (Bovine).